Consider the following 284-residue polypeptide: Tropomyosin beta chain (284 aa).

N-acetylmethionine is present on M1. A coiled-coil region spans residues 1-284; sequence MEAIKKKMQM…DNALNDITSL (284 aa). Composition is skewed to basic and acidic residues over residues 22-40 and 51-66; these read AEQA…KQLE and KGTE…SVKE. A disordered region spans residues 22–66; sequence AEQAEADKKQAEDRCKQLEEEQQGLQKKLKGTEDEVEKYSESVKE.

This sequence belongs to the tropomyosin family. Homodimer. Heterodimer of an alpha (TPM1, TPM3 or TPM4) and a beta (TPM2) chain.

The protein localises to the cytoplasm. It is found in the cytoskeleton. In terms of biological role, binds to actin filaments in muscle and non-muscle cells. Plays a central role, in association with the troponin complex, in the calcium dependent regulation of vertebrate striated muscle contraction. Smooth muscle contraction is regulated by interaction with caldesmon. In non-muscle cells is implicated in stabilizing cytoskeleton actin filaments. The chain is Tropomyosin beta chain (TPM2) from Gallus gallus (Chicken).